We begin with the raw amino-acid sequence, 212 residues long: Pyridoxine/pyridoxamine 5'-phosphate oxidase (212 aa).

Substrate-binding positions include 8-11 and Lys-66; that span reads RREY. Residues 61–66, 76–77, Arg-82, Lys-83, and Gln-105 contribute to the FMN site; these read RIVLLK and FT. Substrate is bound by residues Tyr-123, Arg-127, and Ser-131. Residues 140-141 and Trp-185 contribute to the FMN site; that span reads QS. Position 191–193 (191–193) interacts with substrate; it reads RLH. Arg-195 is an FMN binding site.

It belongs to the pyridoxamine 5'-phosphate oxidase family. In terms of assembly, homodimer. FMN serves as cofactor.

The catalysed reaction is pyridoxamine 5'-phosphate + O2 + H2O = pyridoxal 5'-phosphate + H2O2 + NH4(+). The enzyme catalyses pyridoxine 5'-phosphate + O2 = pyridoxal 5'-phosphate + H2O2. It participates in cofactor metabolism; pyridoxal 5'-phosphate salvage; pyridoxal 5'-phosphate from pyridoxamine 5'-phosphate: step 1/1. The protein operates within cofactor metabolism; pyridoxal 5'-phosphate salvage; pyridoxal 5'-phosphate from pyridoxine 5'-phosphate: step 1/1. Its function is as follows. Catalyzes the oxidation of either pyridoxine 5'-phosphate (PNP) or pyridoxamine 5'-phosphate (PMP) into pyridoxal 5'-phosphate (PLP). The polypeptide is Pyridoxine/pyridoxamine 5'-phosphate oxidase (Shewanella halifaxensis (strain HAW-EB4)).